The chain runs to 299 residues: Probable inactive heme oxygenase 2, chloroplastic (299 aa).

Over residues 1 to 15 (MASLLRPTPLLSTPR) the composition is skewed to low complexity. Disordered regions lie at residues 1 to 20 (MASL…LTHS), 45 to 70 (LCRS…KQYP), and 96 to 126 (DLSE…EETW). A chloroplast-targeting transit peptide spans 1–83 (MASLLRPTPL…IGITEEMRFV (83 aa)). Residues 46–57 (CRSTPTPSQQKA) show a composition bias toward polar residues. Positions 58 to 67 (SQRKRTRYRK) are enriched in basic residues. Residues 105 to 122 (EKEEEEEEEDDDDDDEVK) show a composition bias toward acidic residues.

Belongs to the heme oxygenase family. As to expression, widely expressed at low levels.

It localises to the plastid. It is found in the chloroplast. In terms of biological role, probable inactive heme oxygenase. Binds protoporphyrin IX, a precursor for both heme and chlorophyll biosynthesis. Plays a minor role in phytochrome assembly and photomorphogenesis. The chain is Probable inactive heme oxygenase 2, chloroplastic (HO2) from Arabidopsis thaliana (Mouse-ear cress).